The sequence spans 197 residues: Phosphoheptose isomerase (197 aa).

One can recognise an SIS domain in the interval 34–196; it reads MVQCLLGGNK…DRTLFPQDEQ (163 aa). 49–51 provides a ligand contact to substrate; it reads NGG. The Zn(2+) site is built by H58 and E62. Residues E62, 91-92, 117-119, S122, and Q172 each bind substrate; these read ND and STS. Zn(2+)-binding residues include Q172 and H180.

Belongs to the SIS family. GmhA subfamily. As to quaternary structure, homotetramer. The cofactor is Zn(2+).

It is found in the cytoplasm. It carries out the reaction 2 D-sedoheptulose 7-phosphate = D-glycero-alpha-D-manno-heptose 7-phosphate + D-glycero-beta-D-manno-heptose 7-phosphate. It participates in carbohydrate biosynthesis; D-glycero-D-manno-heptose 7-phosphate biosynthesis; D-glycero-alpha-D-manno-heptose 7-phosphate and D-glycero-beta-D-manno-heptose 7-phosphate from sedoheptulose 7-phosphate: step 1/1. In terms of biological role, catalyzes the isomerization of sedoheptulose 7-phosphate in D-glycero-D-manno-heptose 7-phosphate. The chain is Phosphoheptose isomerase from Shewanella piezotolerans (strain WP3 / JCM 13877).